The primary structure comprises 337 residues: uncharacterized protein (337 aa).

This sequence belongs to the mimivirus R69 family.

This is an uncharacterized protein from Acanthamoeba polyphaga mimivirus (APMV).